A 662-amino-acid chain; its full sequence is Probable protein phosphatase 2C 4 (662 aa).

A Phosphoserine modification is found at Ser-153. Residues 249-653 (DVSLENQNLQ…DDVSIVVISL (405 aa)) enclose the PPM-type phosphatase domain. Positions 286, 287, 581, and 644 each coordinate Mn(2+).

Belongs to the PP2C family. It depends on Mg(2+) as a cofactor. The cofactor is Mn(2+). Expressed in seedlings, roots, leaves, stems, young inflorescences, flowers and siliques.

It localises to the nucleus. The enzyme catalyses O-phospho-L-seryl-[protein] + H2O = L-seryl-[protein] + phosphate. It carries out the reaction O-phospho-L-threonyl-[protein] + H2O = L-threonyl-[protein] + phosphate. Its function is as follows. Involved in leaf development regulation. This Arabidopsis thaliana (Mouse-ear cress) protein is Probable protein phosphatase 2C 4 (PLL5).